Reading from the N-terminus, the 413-residue chain is Putative competence-damage inducible protein (413 aa).

It belongs to the CinA family.

This Thermoanaerobacter sp. (strain X514) protein is Putative competence-damage inducible protein.